A 332-amino-acid polypeptide reads, in one-letter code: Glycine betaine-binding periplasmic protein OusX (332 aa).

An N-terminal signal peptide occupies residues 1–21 (MRNISMATLALTTVLSTGLFA).

The complex is composed of two ATP-binding proteins (OusV), two transmembrane proteins (OusW) and a solute-binding protein (OusX).

It localises to the periplasm. Functionally, part of the OusB ABC transporter complex involved in glycine betaine and choline uptake. Binds glycine betaine. This is Glycine betaine-binding periplasmic protein OusX from Dickeya dadantii (strain 3937) (Erwinia chrysanthemi (strain 3937)).